Here is an 88-residue protein sequence, read N- to C-terminus: Sec-independent protein translocase protein TatA (88 aa).

Residues 3–23 form a helical membrane-spanning segment; it reads IFGVGLPEVTVILILALLIFG. The span at 56–66 shows a compositional bias: basic and acidic residues; that stretch reads MKEEDKDESPK. The segment at 56–88 is disordered; the sequence is MKEEDKDESPKSIESNQSNEINQEKIDSENSNN. Positions 67–76 are enriched in polar residues; the sequence is SIESNQSNEI. Over residues 77–88 the composition is skewed to basic and acidic residues; sequence NQEKIDSENSNN.

This sequence belongs to the TatA/E family. As to quaternary structure, forms a complex with TatC.

The protein localises to the cell inner membrane. Functionally, part of the twin-arginine translocation (Tat) system that transports large folded proteins containing a characteristic twin-arginine motif in their signal peptide across membranes. TatA could form the protein-conducting channel of the Tat system. In Prochlorococcus marinus (strain MIT 9301), this protein is Sec-independent protein translocase protein TatA.